Consider the following 289-residue polypeptide: Protease HtpX homolog (289 aa).

A run of 2 helical transmembrane segments spans residues 11-31 (AALF…IGAG) and 36-54 (APIW…YGYW). Histidine 138 serves as a coordination point for Zn(2+). Glutamate 139 is a catalytic residue. Histidine 142 lines the Zn(2+) pocket. 2 consecutive transmembrane segments (helical) span residues 153 to 173 (VAAA…FFGG) and 182 to 202 (LAMI…QMAI). Glutamate 207 serves as a coordination point for Zn(2+).

It belongs to the peptidase M48B family. Requires Zn(2+) as cofactor.

It localises to the cell membrane. The chain is Protease HtpX homolog from Pseudarthrobacter chlorophenolicus (strain ATCC 700700 / DSM 12829 / CIP 107037 / JCM 12360 / KCTC 9906 / NCIMB 13794 / A6) (Arthrobacter chlorophenolicus).